Reading from the N-terminus, the 521-residue chain is Bifunctional purine biosynthesis protein PurH (521 aa).

Residues 1-145 (MIKQALISVS…KNHRDVTVVV (145 aa)) form the MGS-like domain.

The protein belongs to the PurH family.

It carries out the reaction (6R)-10-formyltetrahydrofolate + 5-amino-1-(5-phospho-beta-D-ribosyl)imidazole-4-carboxamide = 5-formamido-1-(5-phospho-D-ribosyl)imidazole-4-carboxamide + (6S)-5,6,7,8-tetrahydrofolate. The enzyme catalyses IMP + H2O = 5-formamido-1-(5-phospho-D-ribosyl)imidazole-4-carboxamide. It participates in purine metabolism; IMP biosynthesis via de novo pathway; 5-formamido-1-(5-phospho-D-ribosyl)imidazole-4-carboxamide from 5-amino-1-(5-phospho-D-ribosyl)imidazole-4-carboxamide (10-formyl THF route): step 1/1. Its pathway is purine metabolism; IMP biosynthesis via de novo pathway; IMP from 5-formamido-1-(5-phospho-D-ribosyl)imidazole-4-carboxamide: step 1/1. This chain is Bifunctional purine biosynthesis protein PurH, found in Burkholderia cenocepacia (strain HI2424).